Reading from the N-terminus, the 168-residue chain is Crossover junction endodeoxyribonuclease RuvC (168 aa).

Catalysis depends on residues aspartate 11, glutamate 71, and aspartate 144. 3 residues coordinate Mg(2+): aspartate 11, glutamate 71, and aspartate 144.

It belongs to the RuvC family. Homodimer which binds Holliday junction (HJ) DNA. The HJ becomes 2-fold symmetrical on binding to RuvC with unstacked arms; it has a different conformation from HJ DNA in complex with RuvA. In the full resolvosome a probable DNA-RuvA(4)-RuvB(12)-RuvC(2) complex forms which resolves the HJ. It depends on Mg(2+) as a cofactor.

The protein resides in the cytoplasm. The enzyme catalyses Endonucleolytic cleavage at a junction such as a reciprocal single-stranded crossover between two homologous DNA duplexes (Holliday junction).. Functionally, the RuvA-RuvB-RuvC complex processes Holliday junction (HJ) DNA during genetic recombination and DNA repair. Endonuclease that resolves HJ intermediates. Cleaves cruciform DNA by making single-stranded nicks across the HJ at symmetrical positions within the homologous arms, yielding a 5'-phosphate and a 3'-hydroxyl group; requires a central core of homology in the junction. The consensus cleavage sequence is 5'-(A/T)TT(C/G)-3'. Cleavage occurs on the 3'-side of the TT dinucleotide at the point of strand exchange. HJ branch migration catalyzed by RuvA-RuvB allows RuvC to scan DNA until it finds its consensus sequence, where it cleaves and resolves the cruciform DNA. The polypeptide is Crossover junction endodeoxyribonuclease RuvC (Protochlamydia amoebophila (strain UWE25)).